Consider the following 795-residue polypeptide: MYHSLSETRHPLQPEEQEVGIDPLSSYSNKSGGDSNKNGRRTSSTLDSEGTFNSYRKEWEELFVNNNYLATIRQKGINGQLRSSRFRSICWKLFLCVLPQDKSQWISRIEELRAWYSNIKEIHITNPRKVVGQQDLMINNPLSQDEGSLWNKFFQDKELRSMIEQDVKRTFPEMQFFQQENVRKILTDVLFCYARENEQLLYKQGMHELLAPIVFVLHCDHQAFLHASESAQPSEEMKTVLNPEYLEHDAYAVFSQLMETAEPWFSTFEHDGQKGKETLMTPIPFARPQDLGPTIAIVTKVNQIQDHLLKKHDIELYMHLNRLEIAPQIYGLRWVRLLFGREFPLQDLLVVWDALFADGLSLGLVDYIFVAMLLYIRDALISSNYQTCLGLLMHYPFIGDVHSLILKALFLRDPKRNPRPVTYQFHPNLDYYKARGADLMNKSRTNAKGAPLNINKVSNSLINFGRKLISPAMAPGSAGGPVPGGNSSSSSSVVIPTRTSAEAPSHHLQQQQQQQRLMKSESMPVQLNKGLSSKNISSSPSVESLPGGREFTGSPPSSATKKDSFFSNISRSRSHSKTMGRKESEEELEAQISFLQGQLNDLDAMCKYCAKVMDTHLVNIQDVILQENLEKEDQILVSLAGLKQIKDILKGSLRFNQSQLEAEENEQITIADNHYCSSGQGQGRGQGQSVQMSGAIKQASSETPGCTDRGNSDDFILISKDDDGSSARGSFSGQAQPLRTLRSTSGKSQAPVCSPLVFSDPLMGPASASSSNPSSSPDDDSSKDSGFTIVSPLDI.

Basic and acidic residues predominate over residues 1–13 (MYHSLSETRHPLQ). Positions 1-49 (MYHSLSETRHPLQPEEQEVGIDPLSSYSNKSGGDSNKNGRRTSSTLDSE) are disordered. The segment covering 25-49 (SSYSNKSGGDSNKNGRRTSSTLDSE) has biased composition (polar residues). The residue at position 42 (threonine 42) is a Phosphothreonine. Serine 43 and serine 44 each carry phosphoserine. The required for interaction with retromer; involved in interaction with ATG8 family proteins stretch occupies residues 56 to 64 (RKEWEELFV). An LIR 1 motif is present at residues 57–62 (KEWEEL). The 279-residue stretch at 81–359 (LRSSRFRSIC…VVWDALFADG (279 aa)) folds into the Rab-GAP TBC domain. Serine 460 is subject to Phosphoserine. The interval 475–564 (PGSAGGPVPG…PPSSATKKDS (90 aa)) is disordered. Positions 484–496 (GGNSSSSSSVVIP) are enriched in low complexity. Residues serine 522, serine 539, serine 541, serine 544, serine 554, serine 570, serine 584, and serine 730 each carry the phosphoserine modification. Over residues 523–542 (MPVQLNKGLSSKNISSSPSV) the composition is skewed to polar residues. The span at 554–564 (SPPSSATKKDS) shows a compositional bias: polar residues. The tract at residues 674 to 795 (HYCSSGQGQG…GFTIVSPLDI (122 aa)) is disordered. Polar residues predominate over residues 727–748 (ARGSFSGQAQPLRTLRSTSGKS). Residues 765–776 (PASASSSNPSSS) show a composition bias toward low complexity. The LIR 2 motif lies at 785–789 (SGFTI). The required for interaction with ATG8 family proteins stretch occupies residues 786 to 791 (GFTIVS). Position 791 is a phosphoserine (serine 791).

Interacts with MAP1LC3A, MAP1LC3B, MAP1LC3C, GABARAP, GABARAPL1, GABARAPL2. Interacts with VPS29 and VPS35; indicative for an association with retromer CSC subcomplex. MAP1LC3A and VPS29 compete for binding to TBC1D5. Interacts with AP2M1; indicative for an association with the AP2 complex. Interacts with ULK1 and ATG13 (phosphorylated); indicative for an association with the activated ULK1-ATG13-FIP200 complex. Interacts with ATG9A; the interactions seems to be restricted to the AP2-clathrin-associated fraction of ATG9A.

It localises to the endosome membrane. The protein resides in the cytoplasmic vesicle. Its subcellular location is the autophagosome. Functionally, may act as a GTPase-activating protein (GAP) for Rab family protein(s). May act as a GAP for RAB7A. Can displace RAB7A and retromer CSC subcomplex from the endosomal membrane to the cytosol; at least retromer displacement seems to require its catalytic activity. Required for retrograde transport of cargo proteins from endosomes to the trans-Golgi network (TGN); the function seems to require its catalytic activity. Involved in regulation of autophagy. May act as a molecular switch between endosomal and autophagosomal transport and is involved in reprogramming vesicle trafficking upon autophagy induction. Involved in the trafficking of ATG9A upon activation of autophagy. May regulate the recruitment of ATG9A-AP2-containing vesicles to autophagic membranes. The chain is TBC1 domain family member 5 (TBC1D5) from Homo sapiens (Human).